The following is a 293-amino-acid chain: Acetyl-coenzyme A carboxylase carboxyl transferase subunit beta (293 aa).

In terms of domain architecture, CoA carboxyltransferase N-terminal spans 29–293 (LWSKCPECGL…GCRPMEITSA (265 aa)). 4 residues coordinate Zn(2+): Cys-33, Cys-36, Cys-52, and Cys-55. The C4-type zinc-finger motif lies at 33 to 55 (CPECGLVVYVKDLKGNASVCAGC).

This sequence belongs to the AccD/PCCB family. As to quaternary structure, acetyl-CoA carboxylase is a heterohexamer composed of biotin carboxyl carrier protein (AccB), biotin carboxylase (AccC) and two subunits each of ACCase subunit alpha (AccA) and ACCase subunit beta (AccD). It depends on Zn(2+) as a cofactor.

The protein localises to the cytoplasm. It carries out the reaction N(6)-carboxybiotinyl-L-lysyl-[protein] + acetyl-CoA = N(6)-biotinyl-L-lysyl-[protein] + malonyl-CoA. Its pathway is lipid metabolism; malonyl-CoA biosynthesis; malonyl-CoA from acetyl-CoA: step 1/1. Its function is as follows. Component of the acetyl coenzyme A carboxylase (ACC) complex. Biotin carboxylase (BC) catalyzes the carboxylation of biotin on its carrier protein (BCCP) and then the CO(2) group is transferred by the transcarboxylase to acetyl-CoA to form malonyl-CoA. The chain is Acetyl-coenzyme A carboxylase carboxyl transferase subunit beta from Parasynechococcus marenigrum (strain WH8102).